Here is a 156-residue protein sequence, read N- to C-terminus: Large ribosomal subunit protein uL15 (156 aa).

Residues 1 to 44 (MKLNELRDNPGASPKRTRVGRGPGSGKGKMGGRGIKGQKSRSGV) are disordered. Gly residues predominate over residues 21–35 (RGPGSGKGKMGGRGI).

Belongs to the universal ribosomal protein uL15 family. Part of the 50S ribosomal subunit.

Its function is as follows. Binds to the 23S rRNA. The protein is Large ribosomal subunit protein uL15 of Ruegeria sp. (strain TM1040) (Silicibacter sp.).